A 279-amino-acid polypeptide reads, in one-letter code: Tryptophan synthase alpha chain (279 aa).

Catalysis depends on proton acceptor residues Glu49 and Asp60.

It belongs to the TrpA family. In terms of assembly, tetramer of two alpha and two beta chains.

The catalysed reaction is (1S,2R)-1-C-(indol-3-yl)glycerol 3-phosphate + L-serine = D-glyceraldehyde 3-phosphate + L-tryptophan + H2O. Its pathway is amino-acid biosynthesis; L-tryptophan biosynthesis; L-tryptophan from chorismate: step 5/5. Functionally, the alpha subunit is responsible for the aldol cleavage of indoleglycerol phosphate to indole and glyceraldehyde 3-phosphate. The protein is Tryptophan synthase alpha chain of Nitrosospira multiformis (strain ATCC 25196 / NCIMB 11849 / C 71).